We begin with the raw amino-acid sequence, 180 residues long: ATP synthase subunit delta (180 aa).

It belongs to the ATPase delta chain family. F-type ATPases have 2 components, F(1) - the catalytic core - and F(0) - the membrane proton channel. F(1) has five subunits: alpha(3), beta(3), gamma(1), delta(1), epsilon(1). F(0) has three main subunits: a(1), b(2) and c(10-14). The alpha and beta chains form an alternating ring which encloses part of the gamma chain. F(1) is attached to F(0) by a central stalk formed by the gamma and epsilon chains, while a peripheral stalk is formed by the delta and b chains.

It is found in the cell inner membrane. In terms of biological role, f(1)F(0) ATP synthase produces ATP from ADP in the presence of a proton or sodium gradient. F-type ATPases consist of two structural domains, F(1) containing the extramembraneous catalytic core and F(0) containing the membrane proton channel, linked together by a central stalk and a peripheral stalk. During catalysis, ATP synthesis in the catalytic domain of F(1) is coupled via a rotary mechanism of the central stalk subunits to proton translocation. Its function is as follows. This protein is part of the stalk that links CF(0) to CF(1). It either transmits conformational changes from CF(0) to CF(1) or is implicated in proton conduction. The chain is ATP synthase subunit delta from Citrifermentans bemidjiense (strain ATCC BAA-1014 / DSM 16622 / JCM 12645 / Bem) (Geobacter bemidjiensis).